Consider the following 502-residue polypeptide: MPSPHGGVLQDLVARDASKKAELLEIAQSGDLTSWSLTARQICDLELILNGGFSPLDGFLNQQDYQSVVEKSRLQNGLVWTIPITLDVDAEFASQLSPDQRIVLLQDNEFPLAILTVSDVYQPDKAVEAKKVFRGDPEHPAVKYLFEQAGEFYVGGSLEAIQLPVHYDYPGWRKTPAQLRLEFESKQWDRVVAFQTRNPMHRAHRELTVRAARSNNSKILIHPVVGLTKPGDIDHHTRVRVYQEIIKRYPNGMAQLSLLPLAMRMGGDREAVWHAIIRKNYGASHFIVGRDHAGPGKNSKGVDFYGPYDAQELVESYKNELDIEVVPFRMVTYLPDEDRYAPIDEIDTDKTRTLNISGTELRNRLRDGGEIPAWFSYPEVVKILRESNPSRPKQGFALVLSETLPAQLKTALLSTFLQYGGGRHYKVLEHGNNEEILALVPDFVRSGTGLILQNASSLKGTNVFKIGEESGSDIPLETEDKNILHIVQRVVLFLEDQGFFQF.

Positions 1–167 (MPSPHGGVLQ…LEAIQLPVHY (167 aa)) are N-terminal. Residues 168-393 (DYPGWRKTPA…LRESNPSRPK (226 aa)) form a catalytic region. Glutamine 195 is a binding site for sulfate. ATP-binding positions include 195–198 (QTRN) and 289–292 (GRDH). Catalysis depends on residues threonine 196, arginine 197, and asparagine 198. A sulfate-binding site is contributed by arginine 197. Residue alanine 293 participates in sulfate binding. Valine 331 serves as a coordination point for ATP. The tract at residues 394–502 (QGFALVLSET…FLEDQGFFQF (109 aa)) is required for oligomerization; adenylyl-sulfate kinase-like.

It belongs to the sulfate adenylyltransferase family. Homohexamer. Dimer of trimers.

It is found in the cytoplasm. The enzyme catalyses sulfate + ATP + H(+) = adenosine 5'-phosphosulfate + diphosphate. It functions in the pathway sulfur metabolism; hydrogen sulfide biosynthesis; sulfite from sulfate: step 1/3. In terms of biological role, catalyzes the first intracellular reaction of sulfate assimilation, forming adenosine-5'-phosphosulfate (APS) from inorganic sulfate and ATP. Plays an important role in sulfate activation as a component of the biosynthesis pathway of sulfur-containing amino acids. The sequence is that of Sulfate adenylyltransferase from Kluyveromyces lactis (strain ATCC 8585 / CBS 2359 / DSM 70799 / NBRC 1267 / NRRL Y-1140 / WM37) (Yeast).